A 197-amino-acid chain; its full sequence is Nucleoid occlusion factor SlmA (197 aa).

Positions 6–66 constitute an HTH tetR-type domain; sequence NDRRTQILQA…GLIEFIEESL (61 aa). The H-T-H motif DNA-binding region spans 29–48; that stretch reads TTAALAKQVGVSEAALYRHF.

The protein belongs to the nucleoid occlusion factor SlmA family. As to quaternary structure, homodimer. Interacts with FtsZ.

It is found in the cytoplasm. The protein resides in the nucleoid. Required for nucleoid occlusion (NO) phenomenon, which prevents Z-ring formation and cell division over the nucleoid. Acts as a DNA-associated cell division inhibitor that binds simultaneously chromosomal DNA and FtsZ, and disrupts the assembly of FtsZ polymers. SlmA-DNA-binding sequences (SBS) are dispersed on non-Ter regions of the chromosome, preventing FtsZ polymerization at these regions. In Marinomonas sp. (strain MWYL1), this protein is Nucleoid occlusion factor SlmA.